We begin with the raw amino-acid sequence, 217 residues long: Octanoyltransferase (217 aa).

The BPL/LPL catalytic domain maps to 33-208; it reads SSSQDEIWLV…KLCSLLGIAS (176 aa). Residues 72–79, 139–141, and 152–154 contribute to the substrate site; these read RGGQVTYH, SIG, and GLA. Cys170 (acyl-thioester intermediate) is an active-site residue.

It belongs to the LipB family.

The protein resides in the cytoplasm. It catalyses the reaction octanoyl-[ACP] + L-lysyl-[protein] = N(6)-octanoyl-L-lysyl-[protein] + holo-[ACP] + H(+). The protein operates within protein modification; protein lipoylation via endogenous pathway; protein N(6)-(lipoyl)lysine from octanoyl-[acyl-carrier-protein]: step 1/2. Functionally, catalyzes the transfer of endogenously produced octanoic acid from octanoyl-acyl-carrier-protein onto the lipoyl domains of lipoate-dependent enzymes. Lipoyl-ACP can also act as a substrate although octanoyl-ACP is likely to be the physiological substrate. The protein is Octanoyltransferase of Pseudoalteromonas atlantica (strain T6c / ATCC BAA-1087).